The chain runs to 25 residues: uncharacterized protein (25 aa).

This is an uncharacterized protein from Archaeoglobus fulgidus (strain ATCC 49558 / DSM 4304 / JCM 9628 / NBRC 100126 / VC-16).